Reading from the N-terminus, the 539-residue chain is Glutamyl-tRNA(Gln) amidotransferase subunit B, mitochondrial (539 aa).

Belongs to the GatB/GatE family. GatB subfamily. As to quaternary structure, subunit of the heterotrimeric GatFAB amidotransferase (AdT) complex, composed of A, B and F subunits.

Its subcellular location is the mitochondrion. It carries out the reaction L-glutamyl-tRNA(Gln) + L-glutamine + ATP + H2O = L-glutaminyl-tRNA(Gln) + L-glutamate + ADP + phosphate + H(+). In terms of biological role, allows the formation of correctly charged Gln-tRNA(Gln) through the transamidation of misacylated Glu-tRNA(Gln) in the mitochondria. The reaction takes place in the presence of glutamine and ATP through an activated gamma-phospho-Glu-tRNA(Gln). This Kluyveromyces lactis (strain ATCC 8585 / CBS 2359 / DSM 70799 / NBRC 1267 / NRRL Y-1140 / WM37) (Yeast) protein is Glutamyl-tRNA(Gln) amidotransferase subunit B, mitochondrial.